We begin with the raw amino-acid sequence, 196 residues long: DnaA initiator-associating protein DiaA (196 aa).

The region spanning 34–196 is the SIS domain; that stretch reads LVHSLLNGNK…DNTLFLHQDD (163 aa).

It belongs to the SIS family. DiaA subfamily. As to quaternary structure, homotetramer; dimer of dimers.

Required for the timely initiation of chromosomal replication via direct interactions with the DnaA initiator protein. The sequence is that of DnaA initiator-associating protein DiaA from Salmonella paratyphi A (strain ATCC 9150 / SARB42).